A 653-amino-acid chain; its full sequence is Fusexin 1 (653 aa).

Residues 1–24 (MKRVGNCWKASVAAFFLLMFTAFA) form the signal peptide. The Extracellular segment spans residues 25–559 (AADTTSVDTV…FENIWSGDAN (535 aa)). Cystine bridges form between cysteine 129-cysteine 167, cysteine 398-cysteine 441, cysteine 468-cysteine 487, and cysteine 499-cysteine 516. The fusion loop stretch occupies residues 155–160 (DYWTGS). Residues 560–580 (ALNWLQVFVTFIAFLGGFALV) traverse the membrane as a helical segment. Residues 581 to 604 (GVKLGKIVDGLATEFIPVKDSHVR) are Cytoplasmic-facing. Helical transmembrane passes span 605-625 (LVIGLLGGGMIATAVYQLVTD) and 626-646 (PLGLLVTVLGLVVMGYLYLSA). Residues 647–653 (SAPEINL) are Cytoplasmic-facing.

Belongs to the HAP2/GCS1 family. Fusexin 1 subfamily. Homotrimer stabilized by interdomain contacts and numerous Ca(2+) and Na(+) ions.

The protein localises to the cell surface. The protein resides in the cell membrane. Exhibits fusogenic activity. Mediates cell-cell fusion in mammalian cells (bilateral fusion). This is Fusexin 1 from Haloplanus natans (strain DSM 17983 / JCM 14081 / CGMCC 1.8972 / RE-101).